The primary structure comprises 1163 residues: AF4/FMR2 family member 4 (1163 aa).

Residues 1–19 (MNREDRNVLRMKERERRNQ) show a composition bias toward basic and acidic residues. Disordered regions lie at residues 1-48 (MNRE…EDKL), 76-312 (AIPK…ASGD), 324-904 (THSW…PRRT), and 1034-1073 (NSYN…SSGA). A compositionally biased stretch (polar residues) spans 115 to 128 (PSTSQSQKRSSGLQ). Ser120 carries the post-translational modification Phosphoserine. Low complexity-rich tracts occupy residues 129–148 (SGHS…NSSG) and 177–194 (RSSS…NSSH). Basic and acidic residues predominate over residues 198 to 217 (HGNDHHSKEHQRSKSPRDPD). Position 212 is a phosphoserine (Ser212). Composition is skewed to polar residues over residues 227 to 251 (PFSS…SMLQ), 273 to 285 (EHYS…NSMT), and 350 to 375 (KESQ…NGHQ). A phosphoserine mark is found at Ser387, Ser388, Ser389, and Ser392. Positions 403–412 (PRSTPGSNSE) are enriched in polar residues. Positions 413 to 429 (PSHHNSEGADNSRDDSS) are enriched in basic and acidic residues. Positions 430-462 (SHSGSESSSGSDSESESSSSDSEANEPSQSASP) are enriched in low complexity. A phosphoserine mark is found at Ser487, Ser490, and Ser491. Polar residues-rich tracts occupy residues 488 to 501 (PASS…SSQG), 510 to 528 (GTGN…SSAT), and 549 to 560 (SPAQSDSTTQRR). Position 549 is a phosphoserine (Ser549). Over residues 568–586 (KKAEKAAAEEPRGGLKIES) the composition is skewed to basic and acidic residues. Residue Lys583 forms a Glycyl lysine isopeptide (Lys-Gly) (interchain with G-Cter in SUMO2) linkage. Residues 599–612 (SRHKAATKGSRKPN) show a composition bias toward basic residues. Residues 613–627 (IKKESKSSPRPTAEK) show a composition bias toward basic and acidic residues. The residue at position 671 (Ser671) is a Phosphoserine. Thr674 is subject to Phosphothreonine. Phosphoserine is present on residues Ser680, Ser694, Ser703, and Ser706. The residue at position 712 (Tyr712) is a Phosphotyrosine. Basic and acidic residues-rich tracts occupy residues 730–761 (PYKE…EKVS), 769–789 (KNED…DKNS), and 799–811 (ESSK…EKDL). Residue Ser814 is modified to Phosphoserine. Lys822 carries the N6-acetyllysine modification. 5 positions are modified to phosphoserine: Ser836, Ser1043, Ser1055, Ser1058, and Ser1062. The segment covering 836–862 (SQSSSLKSSSNSNKETSGSSKNSSSTS) has biased composition (low complexity). Residues 1062-1073 (SPGNSGNYSSGA) show a composition bias toward low complexity.

This sequence belongs to the AF4 family. In terms of assembly, component of the super elongation complex (SEC), at least composed of EAF1, EAF2, CDK9, MLLT3/AF9, AFF (AFF1 or AFF4), the P-TEFb complex and ELL (ELL, ELL2 or ELL3). Interacts with ELL3; the interaction is direct. Interacts with ELL2; the interaction is direct and leads to stabilize ELL2 and prevent ELL2 ubiquitination and degradation. Dephosphorylated at Ser-549 by the PNUTS-PP1 complex, promoting RNA polymerase II transcription pause-release. In terms of tissue distribution, ubiquitously expressed. Strongly expressed in heart, placenta, skeletal muscle, pancreas and to a lower extent in brain.

Its subcellular location is the nucleus. The protein resides in the chromosome. Key component of the super elongation complex (SEC), a complex required to increase the catalytic rate of RNA polymerase II transcription by suppressing transient pausing by the polymerase at multiple sites along the DNA. In the SEC complex, AFF4 acts as a central scaffold that recruits other factors through direct interactions with ELL proteins (ELL, ELL2 or ELL3) and the P-TEFb complex. In case of infection by HIV-1 virus, the SEC complex is recruited by the viral Tat protein to stimulate viral gene expression. The polypeptide is AF4/FMR2 family member 4 (AFF4) (Homo sapiens (Human)).